We begin with the raw amino-acid sequence, 171 residues long: Large ribosomal subunit protein uL10 (171 aa).

Belongs to the universal ribosomal protein uL10 family. As to quaternary structure, part of the ribosomal stalk of the 50S ribosomal subunit. The N-terminus interacts with L11 and the large rRNA to form the base of the stalk. The C-terminus forms an elongated spine to which L12 dimers bind in a sequential fashion forming a multimeric L10(L12)X complex.

Forms part of the ribosomal stalk, playing a central role in the interaction of the ribosome with GTP-bound translation factors. This is Large ribosomal subunit protein uL10 from Lactococcus lactis subsp. cremoris (strain SK11).